A 186-amino-acid chain; its full sequence is Negative modulator of initiation of replication (186 aa).

Residues 93 to 94 (AV) form an interaction with DNA region.

The protein belongs to the SeqA family. Homodimer. Polymerizes to form helical filaments.

The protein resides in the cytoplasm. In terms of biological role, negative regulator of replication initiation, which contributes to regulation of DNA replication and ensures that replication initiation occurs exactly once per chromosome per cell cycle. Binds to pairs of hemimethylated GATC sequences in the oriC region, thus preventing assembly of replication proteins and re-initiation at newly replicated origins. Repression is relieved when the region becomes fully methylated. In Shewanella halifaxensis (strain HAW-EB4), this protein is Negative modulator of initiation of replication.